An 805-amino-acid polypeptide reads, in one-letter code: MSFNHREIEKKWQKYWEENKTFKTTEDDGKRKFYALDMFPYPSGAGLHVGHPEGYTATDILARMKRMQGYNVLHPMGWDAFGLPAEQYALDTGNDPAEFTEKNINNFRRQIKSLGFSYDWDREVNTTDPNYYKWTQWIFLKLYEKGLAYMDEVPVNWCPALGTVLANEEVIDGKSERGGHPVIRKPMKQWMLRITAYADRLLEDLEELDWPESIKEMQRNWIGRSEGANIHFQVDGHDETFTVFTTRPDTLFGATYAVLAPEHPLVEKITTPEQKEAVEAYLKQIQSKSDLERTDLAKEKTGVFTGAYAINPANGEKLPIWIADYVLMSYGTGAIMAVPAHDERDYEFAKKFNLPIKQVVAGGDISKEAYTGDGEHINSDFLNGLNKEEATKKMIEWLEANGKGEKKVSYRLRDWLFSRQRYWGEPIPIIHWEDGTMTPVPEEELPLVLPKTDEIKPSGTGESPLANIEEWVSVVDPKTGKKGRRETNTMPQWAGSCWYYLRYIDPHNDKQLADPEKLEKWLPVDIYIGGAEHAVLHLLYARFWHKFLYDIGVVPTKEPFQKLFNQGMILGENNEKMSKSKGNVVNPDDIVESHGADTLRLYEMFMGPLEASIAWSTKGLDGARRFLDRVWRLFVEENGELNPKIVDNPETDTLERVYHQTVKKVTEDYEALRFNTAISQLMVFINEAYKAPILPKAYMEGFVKLLSPVCPHIAEELWEKLGYSNTIAYEAWPAYDEAKLVEDEVEIVIQVNGKVRAKLHVPADATKEQLEQLAMEDEKIKEQIEGKTVRKVIAVPGKLVNIVAN.

Residues 40–51 carry the 'HIGH' region motif; it reads PYPSGAGLHVGH. The 'KMSKS' region signature appears at 576 to 580; it reads KMSKS. Lys-579 contributes to the ATP binding site.

It belongs to the class-I aminoacyl-tRNA synthetase family.

It is found in the cytoplasm. The catalysed reaction is tRNA(Leu) + L-leucine + ATP = L-leucyl-tRNA(Leu) + AMP + diphosphate. In Anoxybacillus flavithermus (strain DSM 21510 / WK1), this protein is Leucine--tRNA ligase.